The primary structure comprises 459 residues: Serine--tRNA ligase (459 aa).

Position 254–256 (254–256) interacts with L-serine; it reads TAE. Residues 285–287 and V301 each bind ATP; that span reads RKE. E308 serves as a coordination point for L-serine. 372 to 375 is a binding site for ATP; that stretch reads EMVS. L-serine is bound at residue T408.

It belongs to the class-II aminoacyl-tRNA synthetase family. Type-1 seryl-tRNA synthetase subfamily. As to quaternary structure, homodimer. The tRNA molecule binds across the dimer.

The protein resides in the cytoplasm. It catalyses the reaction tRNA(Ser) + L-serine + ATP = L-seryl-tRNA(Ser) + AMP + diphosphate + H(+). It carries out the reaction tRNA(Sec) + L-serine + ATP = L-seryl-tRNA(Sec) + AMP + diphosphate + H(+). Its pathway is aminoacyl-tRNA biosynthesis; selenocysteinyl-tRNA(Sec) biosynthesis; L-seryl-tRNA(Sec) from L-serine and tRNA(Sec): step 1/1. Functionally, catalyzes the attachment of serine to tRNA(Ser). Is also able to aminoacylate tRNA(Sec) with serine, to form the misacylated tRNA L-seryl-tRNA(Sec), which will be further converted into selenocysteinyl-tRNA(Sec). The sequence is that of Serine--tRNA ligase from Desulfurococcus amylolyticus (strain DSM 18924 / JCM 16383 / VKM B-2413 / 1221n) (Desulfurococcus kamchatkensis).